The following is a 220-amino-acid chain: SAGA-associated factor 11 homolog (220 aa).

Residues 1 to 38 are disordered; the sequence is MSTGTANSAVSSKSTNSTTSTSKVPVNEKSNNSQNANT. Residues 126 to 147 form an SGF11-type zinc finger; sequence CTCPNCDRPVSAARFAPHLEKC. Low complexity-rich tracts occupy residues 160-177 and 204-220; these read RRLA…SSSS and SQNS…GKTF. The tract at residues 160–220 is disordered; the sequence is RRLATKESNS…GSKKNNGKTF (61 aa).

The protein belongs to the SGF11 family. As to quaternary structure, component of some SAGA transcription coactivator-HAT complexes. Within the SAGA complex, participates in a subcomplex of SAGA called the DUB module (deubiquitination module).

It is found in the nucleus. In terms of biological role, component of the transcription regulatory histone acetylation (HAT) complex SAGA, a multiprotein complex that activates transcription by remodeling chromatin and mediating histone acetylation and deubiquitination. Within the SAGA complex, participates in a subcomplex that specifically deubiquitinates histone H2B. The SAGA complex is recruited to specific gene promoters by activators, where it is required for transcription. The chain is SAGA-associated factor 11 homolog from Musca domestica (House fly).